The chain runs to 354 residues: NAD-dependent epimerase/dehydratase ALT6 (354 aa).

NADP(+) is bound by residues Lys41 and Tyr174.

The protein belongs to the NAD(P)-dependent epimerase/dehydratase family. Dihydroflavonol-4-reductase subfamily.

The protein operates within mycotoxin biosynthesis. NAD-dependent epimerase/dehydratase; part of the gene cluster that mediates the biosynthesis of the host-selective toxins (HSTs) AAL-toxins, sphinganine-analog mycotoxins responsible for Alternaria stem canker on tomato by the tomato pathotype. The biosynthesis starts with the polyketide synthase ALT1-catalyzed C-16 carbon chain assembly from one starter acetyl-CoA unit with malonyl-CoA extender units. ALT1 also selectively transfers methyl groups at the first and the third cycle of chain elongation for AAL toxin. The C-16 polyketide chain is released from the enzyme by a nucleophilic attack of a carbanion, which is derived from R-carbon of glycin by decarboxylation, on the carbonyl carbon of polyketide acyl chain. This step is probably catalyzed by a pyridoxal 5'-phosphate-dependent aminoacyl transferase ALT4. The respective functions of the other enzymes encoded by the cluster have still to be elucidated. The sphingosine N-acyltransferase-like protein ALT7 seems not to act as a resistance/self-tolerance factor against the toxin in the toxin biosynthetic gene cluster, contrary to what is expected. The protein is NAD-dependent epimerase/dehydratase ALT6 of Alternaria alternata (Alternaria rot fungus).